A 232-amino-acid polypeptide reads, in one-letter code: Large ribosomal subunit protein uL1 (232 aa).

Belongs to the universal ribosomal protein uL1 family. As to quaternary structure, part of the 50S ribosomal subunit.

In terms of biological role, binds directly to 23S rRNA. The L1 stalk is quite mobile in the ribosome, and is involved in E site tRNA release. Its function is as follows. Protein L1 is also a translational repressor protein, it controls the translation of the L11 operon by binding to its mRNA. The chain is Large ribosomal subunit protein uL1 from Methylorubrum extorquens (strain CM4 / NCIMB 13688) (Methylobacterium extorquens).